The primary structure comprises 874 residues: Bifunctional uridylyltransferase/uridylyl-removing enzyme (874 aa).

Residues 1–332 (MTLQSPLTFR…NGGASEDAEI (332 aa)) form a uridylyltransferase region. The uridylyl-removing stretch occupies residues 333-692 (IDEDFQRRGA…ISKKATRGGT (360 aa)). An HD domain is found at 451 to 573 (VDEHSIRLLK…VRDEEYLEYL (123 aa)). ACT domains are found at residues 693-777 (EVFV…RTPN) and 800-874 (LMEF…SVSA).

This sequence belongs to the GlnD family. It depends on Mg(2+) as a cofactor.

It carries out the reaction [protein-PII]-L-tyrosine + UTP = [protein-PII]-uridylyl-L-tyrosine + diphosphate. The catalysed reaction is [protein-PII]-uridylyl-L-tyrosine + H2O = [protein-PII]-L-tyrosine + UMP + H(+). Uridylyltransferase (UTase) activity is inhibited by glutamine, while glutamine activates uridylyl-removing (UR) activity. In terms of biological role, modifies, by uridylylation and deuridylylation, the PII regulatory proteins (GlnB and homologs), in response to the nitrogen status of the cell that GlnD senses through the glutamine level. Under low glutamine levels, catalyzes the conversion of the PII proteins and UTP to PII-UMP and PPi, while under higher glutamine levels, GlnD hydrolyzes PII-UMP to PII and UMP (deuridylylation). Thus, controls uridylylation state and activity of the PII proteins, and plays an important role in the regulation of nitrogen assimilation and metabolism. The polypeptide is Bifunctional uridylyltransferase/uridylyl-removing enzyme (Vibrio campbellii (strain ATCC BAA-1116)).